Consider the following 236-residue polypeptide: NAD(P)H-hydrate epimerase (236 aa).

Positions 11–217 (AAALDQELMS…AIASKYGFEV (207 aa)) constitute a YjeF N-terminal domain. Residue 61-65 (NNGGD) participates in (6S)-NADPHX binding. K(+) is bound by residues N62 and D123. (6S)-NADPHX is bound by residues 127–133 (GFSFSGE) and D156. S159 lines the K(+) pocket.

Belongs to the NnrE/AIBP family. K(+) serves as cofactor.

It localises to the cytoplasm. The protein localises to the mitochondrion. The enzyme catalyses (6R)-NADHX = (6S)-NADHX. It carries out the reaction (6R)-NADPHX = (6S)-NADPHX. Its function is as follows. Catalyzes the epimerization of the S- and R-forms of NAD(P)HX, a damaged form of NAD(P)H that is a result of enzymatic or heat-dependent hydration. This is a prerequisite for the S-specific NAD(P)H-hydrate dehydratase to allow the repair of both epimers of NAD(P)HX. In Fusarium vanettenii (strain ATCC MYA-4622 / CBS 123669 / FGSC 9596 / NRRL 45880 / 77-13-4) (Fusarium solani subsp. pisi), this protein is NAD(P)H-hydrate epimerase.